A 231-amino-acid polypeptide reads, in one-letter code: 7-cyano-7-deazaguanine synthase (231 aa).

ATP is bound at residue phenylalanine 8 to leucine 18. Zn(2+) is bound by residues cysteine 188, cysteine 197, cysteine 200, and cysteine 203.

It belongs to the QueC family. The cofactor is Zn(2+).

It carries out the reaction 7-carboxy-7-deazaguanine + NH4(+) + ATP = 7-cyano-7-deazaguanine + ADP + phosphate + H2O + H(+). The protein operates within purine metabolism; 7-cyano-7-deazaguanine biosynthesis. Catalyzes the ATP-dependent conversion of 7-carboxy-7-deazaguanine (CDG) to 7-cyano-7-deazaguanine (preQ(0)). The polypeptide is 7-cyano-7-deazaguanine synthase (Shigella dysenteriae serotype 1 (strain Sd197)).